Reading from the N-terminus, the 417-residue chain is Phosphoglycerate kinase (417 aa).

The (2R)-3-phosphoglycerate site is built by Val-23, Asp-24, Phe-25, Asn-26, Gln-39, Arg-40, Ser-63, His-64, Gly-66, Arg-67, Leu-122, Arg-123, His-170, and Arg-171. Gly-214 lines the ADP pocket. Residue Gly-214 participates in CDP binding. Ala-215 and Lys-216 together coordinate AMP. Residue Ala-215 coordinates ATP. A Mg(2+)-binding site is contributed by Ala-215. Position 219 (Asp-219) interacts with CDP. Asp-219 is a Mg(2+) binding site. Lys-220 is a binding site for AMP. Lys-220 provides a ligand contact to ATP. Gly-238 contacts ADP. Gly-238 provides a ligand contact to CDP. The AMP site is built by Gly-239 and Gly-313. ATP-binding residues include Gly-239 and Gly-313. CDP contacts are provided by Gly-338 and Phe-343. Phe-343 provides a ligand contact to ADP. Position 344 (Glu-344) interacts with AMP. The ATP site is built by Glu-344, Asp-375, and Thr-376. Asp-375 is a Mg(2+) binding site.

This sequence belongs to the phosphoglycerate kinase family. In terms of assembly, monomer. Mg(2+) serves as cofactor.

Its subcellular location is the cytoplasm. The protein resides in the mitochondrion. The catalysed reaction is (2R)-3-phosphoglycerate + ATP = (2R)-3-phospho-glyceroyl phosphate + ADP. Its pathway is carbohydrate degradation; glycolysis; pyruvate from D-glyceraldehyde 3-phosphate: step 2/5. Functionally, catalyzes one of the two ATP producing reactions in the glycolytic pathway via the reversible conversion of 1,3-diphosphoglycerate to 3-phosphoglycerate. Both L- and D- forms of purine and pyrimidine nucleotides can be used as substrates, but the activity is much lower on pyrimidines. Negatively regulates the biosynthesis of acetyl-CoA from pyruvate in the mitochondrion. The protein is Phosphoglycerate kinase (PGKA) of Penicillium citrinum.